A 247-amino-acid polypeptide reads, in one-letter code: 3-oxoacyl-[acyl-carrier-protein] reductase (247 aa).

11–35 (VTGASRGIGKATALALAATGMKVVV) lines the NADP(+) pocket. S143 contacts substrate. The active-site Proton acceptor is the Y156.

This sequence belongs to the short-chain dehydrogenases/reductases (SDR) family.

The catalysed reaction is a (3R)-hydroxyacyl-[ACP] + NADP(+) = a 3-oxoacyl-[ACP] + NADPH + H(+). The protein operates within lipid metabolism; fatty acid biosynthesis. Its function is as follows. Catalyzes the NADPH-dependent reduction of beta-ketoacyl-ACP substrates to beta-hydroxyacyl-ACP products, the first reductive step in the elongation cycle of fatty acid biosynthesis. Is capable of reducing acetoacetyl-CoA, but less well than its paralog PhaB. This chain is 3-oxoacyl-[acyl-carrier-protein] reductase (fabG), found in Synechocystis sp. (strain ATCC 27184 / PCC 6803 / Kazusa).